The sequence spans 61 residues: Small ribosomal subunit protein uS14 (61 aa).

Cys24, Cys27, Cys40, and Cys43 together coordinate Zn(2+).

Belongs to the universal ribosomal protein uS14 family. Zinc-binding uS14 subfamily. Part of the 30S ribosomal subunit. Contacts proteins S3 and S10. Zn(2+) is required as a cofactor.

Binds 16S rRNA, required for the assembly of 30S particles and may also be responsible for determining the conformation of the 16S rRNA at the A site. The sequence is that of Small ribosomal subunit protein uS14 from Spiroplasma citri.